The following is an 881-amino-acid chain: Alanine--tRNA ligase (881 aa).

Zn(2+)-binding residues include His563, His567, Cys672, and His676.

This sequence belongs to the class-II aminoacyl-tRNA synthetase family. Zn(2+) is required as a cofactor.

The protein resides in the cytoplasm. It carries out the reaction tRNA(Ala) + L-alanine + ATP = L-alanyl-tRNA(Ala) + AMP + diphosphate. In terms of biological role, catalyzes the attachment of alanine to tRNA(Ala) in a two-step reaction: alanine is first activated by ATP to form Ala-AMP and then transferred to the acceptor end of tRNA(Ala). Also edits incorrectly charged Ser-tRNA(Ala) and Gly-tRNA(Ala) via its editing domain. The sequence is that of Alanine--tRNA ligase from Azorhizobium caulinodans (strain ATCC 43989 / DSM 5975 / JCM 20966 / LMG 6465 / NBRC 14845 / NCIMB 13405 / ORS 571).